The following is a 173-amino-acid chain: Protein SHI RELATED SEQUENCE 8 (173 aa).

Residues C52, C63, C68, C72, and C79 each coordinate Zn(2+). The zn(2)-C6 fungal-type; degenerate DNA-binding region spans C52–C79. The span at L100–P110 shows a compositional bias: low complexity. The interval L100–E121 is disordered.

The protein belongs to the SHI protein family.

The protein localises to the nucleus. Transcription activator that binds DNA on 5'-ACTCTAC-3' and promotes auxin homeostasis-regulating gene expression (e.g. YUC genes), as well as genes affecting stamen development, cell expansion and timing of flowering. Synergistically with other SHI-related proteins, regulates gynoecium, stamen and leaf development in a dose-dependent manner, controlling apical-basal patterning. Promotes style and stigma formation, and influence vascular development during gynoecium development. May also have a role in the formation and/or maintenance of the shoot apical meristem (SAM). In Arabidopsis thaliana (Mouse-ear cress), this protein is Protein SHI RELATED SEQUENCE 8 (SRS8).